We begin with the raw amino-acid sequence, 201 residues long: Small ribosomal subunit protein uS4c (201 aa).

Residues 15–44 (LGALPGLTSKRPKTGNDLKNQSRSGKKSQY) form a disordered region. The region spanning 89–150 (MRLDNILFRL…EKKSRTLIQN (62 aa)) is the S4 RNA-binding domain.

The protein belongs to the universal ribosomal protein uS4 family. As to quaternary structure, part of the 30S ribosomal subunit. Contacts protein S5. The interaction surface between S4 and S5 is involved in control of translational fidelity.

The protein resides in the plastid. It is found in the chloroplast. One of the primary rRNA binding proteins, it binds directly to 16S rRNA where it nucleates assembly of the body of the 30S subunit. Its function is as follows. With S5 and S12 plays an important role in translational accuracy. This Cucumis sativus (Cucumber) protein is Small ribosomal subunit protein uS4c (rps4).